A 91-amino-acid polypeptide reads, in one-letter code: Teretoxin Tan6.2 (91 aa).

Residues 1–21 (MATSGRLLCVCLVLGLVFGSL) form the signal peptide. A propeptide spanning residues 22–50 (GYPVMEKKRAGKNFDLGTIANWAWQIGEK) is cleaved from the precursor.

The protein belongs to the teretoxin M (TM) superfamily. In terms of processing, contains 3 disulfide bonds. As to expression, expressed by the venom duct.

It is found in the secreted. The polypeptide is Teretoxin Tan6.2 (Terebra anilis (Auger snail)).